Reading from the N-terminus, the 257-residue chain is Acyl-[acyl-carrier-protein]--UDP-N-acetylglucosamine O-acyltransferase (257 aa).

This sequence belongs to the transferase hexapeptide repeat family. LpxA subfamily. Homotrimer.

It localises to the cytoplasm. It carries out the reaction a (3R)-hydroxyacyl-[ACP] + UDP-N-acetyl-alpha-D-glucosamine = a UDP-3-O-[(3R)-3-hydroxyacyl]-N-acetyl-alpha-D-glucosamine + holo-[ACP]. It functions in the pathway glycolipid biosynthesis; lipid IV(A) biosynthesis; lipid IV(A) from (3R)-3-hydroxytetradecanoyl-[acyl-carrier-protein] and UDP-N-acetyl-alpha-D-glucosamine: step 1/6. In terms of biological role, involved in the biosynthesis of lipid A, a phosphorylated glycolipid that anchors the lipopolysaccharide to the outer membrane of the cell. The sequence is that of Acyl-[acyl-carrier-protein]--UDP-N-acetylglucosamine O-acyltransferase from Fusobacterium nucleatum subsp. nucleatum (strain ATCC 25586 / DSM 15643 / BCRC 10681 / CIP 101130 / JCM 8532 / KCTC 2640 / LMG 13131 / VPI 4355).